Reading from the N-terminus, the 137-residue chain is ATP synthase epsilon chain (137 aa).

Belongs to the ATPase epsilon chain family. In terms of assembly, F-type ATPases have 2 components, CF(1) - the catalytic core - and CF(0) - the membrane proton channel. CF(1) has five subunits: alpha(3), beta(3), gamma(1), delta(1), epsilon(1). CF(0) has three main subunits: a, b and c.

The protein resides in the cell inner membrane. Its function is as follows. Produces ATP from ADP in the presence of a proton gradient across the membrane. In Ruegeria sp. (strain TM1040) (Silicibacter sp.), this protein is ATP synthase epsilon chain.